A 115-amino-acid polypeptide reads, in one-letter code: Migration and invasion enhancer 1 (115 aa).

A compositionally biased stretch (polar residues) spans 1 to 10 (MSGDTGTTSV). The segment at 1–22 (MSGDTGTTSVAPPPGETEPGHG) is disordered. S2 carries the N-acetylserine modification. Residues C30 and C33 are joined by a disulfide bond. The S-geranylgeranyl cysteine moiety is linked to residue C112. The propeptide at 113–115 (VIL) is removed in mature form.

It belongs to the SelWTH family. Interacts with GPX1. Post-translationally, isoprenylation facilitates association with the plasma membrane and enhances the migratory phenotype of cells by inducing increased filopodia formation.

The protein localises to the cytoplasm. It is found in the cytosol. Its subcellular location is the cell membrane. Its function is as follows. Increases cell migration by inducing filopodia formation at the leading edge of migrating cells. Plays a role in regulation of apoptosis, possibly through control of CASP3. May be involved in a redox-related process. In Bos taurus (Bovine), this protein is Migration and invasion enhancer 1 (MIEN1).